The following is a 338-amino-acid chain: Holliday junction branch migration complex subunit RuvB (338 aa).

The tract at residues 4 to 187 (ADRLIHAEPQ…FGIPLRLEFY (184 aa)) is large ATPase domain (RuvB-L). Residues arginine 27, glycine 68, lysine 71, threonine 72, threonine 73, 134–136 (EDY), arginine 177, tyrosine 187, and arginine 224 contribute to the ATP site. Position 72 (threonine 72) interacts with Mg(2+). A small ATPAse domain (RuvB-S) region spans residues 188-258 (NVKDLSSIVT…VAELALDMLD (71 aa)). The segment at 261–338 (SEGFDYMDRK…RHFDIIQPEK (78 aa)) is head domain (RuvB-H). Positions 297, 316, and 321 each coordinate DNA.

Belongs to the RuvB family. Homohexamer. Forms an RuvA(8)-RuvB(12)-Holliday junction (HJ) complex. HJ DNA is sandwiched between 2 RuvA tetramers; dsDNA enters through RuvA and exits via RuvB. An RuvB hexamer assembles on each DNA strand where it exits the tetramer. Each RuvB hexamer is contacted by two RuvA subunits (via domain III) on 2 adjacent RuvB subunits; this complex drives branch migration. In the full resolvosome a probable DNA-RuvA(4)-RuvB(12)-RuvC(2) complex forms which resolves the HJ.

The protein localises to the cytoplasm. The enzyme catalyses ATP + H2O = ADP + phosphate + H(+). In terms of biological role, the RuvA-RuvB-RuvC complex processes Holliday junction (HJ) DNA during genetic recombination and DNA repair, while the RuvA-RuvB complex plays an important role in the rescue of blocked DNA replication forks via replication fork reversal (RFR). RuvA specifically binds to HJ cruciform DNA, conferring on it an open structure. The RuvB hexamer acts as an ATP-dependent pump, pulling dsDNA into and through the RuvAB complex. RuvB forms 2 homohexamers on either side of HJ DNA bound by 1 or 2 RuvA tetramers; 4 subunits per hexamer contact DNA at a time. Coordinated motions by a converter formed by DNA-disengaged RuvB subunits stimulates ATP hydrolysis and nucleotide exchange. Immobilization of the converter enables RuvB to convert the ATP-contained energy into a lever motion, pulling 2 nucleotides of DNA out of the RuvA tetramer per ATP hydrolyzed, thus driving DNA branch migration. The RuvB motors rotate together with the DNA substrate, which together with the progressing nucleotide cycle form the mechanistic basis for DNA recombination by continuous HJ branch migration. Branch migration allows RuvC to scan DNA until it finds its consensus sequence, where it cleaves and resolves cruciform DNA. The chain is Holliday junction branch migration complex subunit RuvB from Shewanella woodyi (strain ATCC 51908 / MS32).